A 388-amino-acid polypeptide reads, in one-letter code: 8-amino-7-oxononanoate synthase (388 aa).

Arginine 20 serves as a coordination point for substrate. Pyridoxal 5'-phosphate is bound at residue 107–108 (GY). Residue histidine 132 participates in substrate binding. Pyridoxal 5'-phosphate is bound by residues serine 178, histidine 206, and threonine 237. Lysine 240 is modified (N6-(pyridoxal phosphate)lysine). Threonine 356 lines the substrate pocket.

Belongs to the class-II pyridoxal-phosphate-dependent aminotransferase family. BioF subfamily. In terms of assembly, homodimer. It depends on pyridoxal 5'-phosphate as a cofactor.

The catalysed reaction is 6-carboxyhexanoyl-[ACP] + L-alanine + H(+) = (8S)-8-amino-7-oxononanoate + holo-[ACP] + CO2. Its pathway is cofactor biosynthesis; biotin biosynthesis. Catalyzes the decarboxylative condensation of pimeloyl-[acyl-carrier protein] and L-alanine to produce 8-amino-7-oxononanoate (AON), [acyl-carrier protein], and carbon dioxide. This Herminiimonas arsenicoxydans protein is 8-amino-7-oxononanoate synthase.